A 188-amino-acid polypeptide reads, in one-letter code: dITP/XTP pyrophosphatase (188 aa).

10–15 serves as a coordination point for substrate; it reads TSNPHK. Positions 39 and 69 each coordinate Mg(2+). The active-site Proton acceptor is the Asp69. Substrate contacts are provided by residues Ser70, 145-148, Lys168, and 173-174; these read FGFD and HR.

It belongs to the HAM1 NTPase family. Homodimer. The cofactor is Mg(2+).

It carries out the reaction XTP + H2O = XMP + diphosphate + H(+). The catalysed reaction is dITP + H2O = dIMP + diphosphate + H(+). The enzyme catalyses ITP + H2O = IMP + diphosphate + H(+). Pyrophosphatase that catalyzes the hydrolysis of nucleoside triphosphates to their monophosphate derivatives, with a high preference for the non-canonical purine nucleotides XTP (xanthosine triphosphate), dITP (deoxyinosine triphosphate) and ITP. Seems to function as a house-cleaning enzyme that removes non-canonical purine nucleotides from the nucleotide pool, thus preventing their incorporation into DNA/RNA and avoiding chromosomal lesions. The protein is dITP/XTP pyrophosphatase of Ignicoccus hospitalis (strain KIN4/I / DSM 18386 / JCM 14125).